A 417-amino-acid polypeptide reads, in one-letter code: Fatty-acid peroxygenase (417 aa).

Cys-363 contributes to the heme binding site.

It belongs to the cytochrome P450 family. Requires heme as cofactor.

The enzyme catalyses a 1,2-saturated fatty acid + H2O2 = a 2-hydroxy fatty acid + H2O. The catalysed reaction is a 2,3-saturated fatty acid + H2O2 = a 3-hydroxy fatty acid + H2O. It catalyses the reaction tetradecanoate + H2O2 = (3R)-hydroxytetradecanoate + H2O. It carries out the reaction tetradecanoate + H2O2 = (2R)-hydroxytetradecanoate + H2O. The enzyme catalyses tetradecanoate + H2O2 = (2S)-hydroxytetradecanoate + H2O. In terms of biological role, catalyzes the alpha- and beta-hydroxylation of myristic acid in the presence of hydrogen peroxide. The chain is Fatty-acid peroxygenase (cypC) from Bacillus subtilis (strain 168).